Reading from the N-terminus, the 442-residue chain is MENAKMNSLIAQYPLVKDLVALKETTWFNPGTTSLAEGLPYVGLTEQDVQDAHARLSRFAPYLAKAFPETAASGGIIESELAAIPAMQKRLEKEYQQPISGQLLLKKDSHLPISGSIKARGGIYEVLAHAEKLALEAGLLTLEDDYSKLLSPEFKQFFSQYSIAVGSTGNLGLSIGIMSARIGFKVTVHMSADARAWKKAKLRSHGVTVVEYEQDYGVAVEEGRKAAQSDPNCFFIDDENSRTLFLGYSVAGQRLKAQFAQQGRIVDADNPLFVYLPCGVGGGPGGVAFGLKLAFGDHVHCFFAEPTHSPCMLLGVHTGLHDQISVQDIGIDNLTAADGLAVGRASGFVGRAMERLLDGFYTLSDQTMYDMLGWLAQEEGIRLEPSALAGMAGPQRVCASVSYQQIHGFSAEQLRNATHLVWATGGGMVPEEEMNQYLAKGR.

An N6-(pyridoxal phosphate)lysine modification is found at K118.

The protein belongs to the serine/threonine dehydratase family. DsdA subfamily. As to quaternary structure, monomer. Requires pyridoxal 5'-phosphate as cofactor.

The catalysed reaction is D-serine = pyruvate + NH4(+). The polypeptide is D-serine dehydratase (Escherichia fergusonii (strain ATCC 35469 / DSM 13698 / CCUG 18766 / IAM 14443 / JCM 21226 / LMG 7866 / NBRC 102419 / NCTC 12128 / CDC 0568-73)).